Here is a 212-residue protein sequence, read N- to C-terminus: Adenylate kinase (212 aa).

10 to 15 (GAGKGT) provides a ligand contact to ATP. Residues 30-59 (STGDMFRAAMANQTEMGVLAKSYIDKGELV) form an NMP region. AMP contacts are provided by residues Thr31, Arg36, 57 to 59 (ELV), 86 to 89 (GYPR), and Gln93. The interval 127–159 (GRIIHRVTGETFHKVFNPPVDYKEEDYYQREDD) is LID. ATP-binding positions include Arg128 and 137–138 (TF). AMP-binding residues include Arg156 and Arg167. Position 195 (Gln195) interacts with ATP.

This sequence belongs to the adenylate kinase family. Monomer.

It is found in the cytoplasm. It catalyses the reaction AMP + ATP = 2 ADP. The protein operates within purine metabolism; AMP biosynthesis via salvage pathway; AMP from ADP: step 1/1. Functionally, catalyzes the reversible transfer of the terminal phosphate group between ATP and AMP. Plays an important role in cellular energy homeostasis and in adenine nucleotide metabolism. This Streptococcus pneumoniae (strain JJA) protein is Adenylate kinase.